The chain runs to 315 residues: tRNA pseudouridine synthase B (315 aa).

Asp54 serves as the catalytic Nucleophile.

Belongs to the pseudouridine synthase TruB family. Type 1 subfamily.

It carries out the reaction uridine(55) in tRNA = pseudouridine(55) in tRNA. Functionally, responsible for synthesis of pseudouridine from uracil-55 in the psi GC loop of transfer RNAs. The chain is tRNA pseudouridine synthase B from Cupriavidus taiwanensis (strain DSM 17343 / BCRC 17206 / CCUG 44338 / CIP 107171 / LMG 19424 / R1) (Ralstonia taiwanensis (strain LMG 19424)).